The following is a 449-amino-acid chain: Probable hexaprenyl pyrophosphate synthase, mitochondrial (449 aa).

Isopentenyl diphosphate-binding residues include lysine 122, arginine 125, and histidine 200. 2 residues coordinate Mg(2+): aspartate 207 and aspartate 211. Arginine 216 contributes to the an all-trans-polyprenyl diphosphate binding site. An isopentenyl diphosphate-binding site is contributed by arginine 217. Residues lysine 300, threonine 301, glutamine 338, and lysine 355 each coordinate an all-trans-polyprenyl diphosphate.

The protein belongs to the FPP/GGPP synthase family. Mg(2+) serves as cofactor.

The protein resides in the mitochondrion. It participates in cofactor biosynthesis; ubiquinone biosynthesis. In terms of biological role, assembly of polyisoprenoid side chains. The polyprenyl synthase of coenzyme Q biosynthesis catalyzes the formation from isopentenyl diphosphate of all trans-polyprenyl pyrophosphates generally ranging in length of between 6 and 10 isoprene units depending on the species. The sequence is that of Probable hexaprenyl pyrophosphate synthase, mitochondrial from Neurospora crassa (strain ATCC 24698 / 74-OR23-1A / CBS 708.71 / DSM 1257 / FGSC 987).